The primary structure comprises 326 residues: Probable 9-O-acetyl-N-acetylneuraminic acid deacetylase (326 aa).

Residues 1-21 (MNAIISPDYYYVLTVAGQSNA) form the signal peptide.

Its subcellular location is the periplasm. In terms of biological role, probably catalyzes the hydrolysis of the 9-O-acetyl group of 9-O-acetyl-N-acetylneuraminate (Neu5,9Ac2). Is required for growth of E.coli on Neu5,9Ac2, an alternative sialic acid commonly found in mammalian host mucosal sites, in particular in the human intestine. The sequence is that of Probable 9-O-acetyl-N-acetylneuraminic acid deacetylase (nanS) from Escherichia coli (strain K12).